The sequence spans 377 residues: uncharacterized protein (377 aa).

5 disordered regions span residues 10-79 (YSDG…NVNN), 91-141 (KKNN…DKEE), 182-257 (EAKK…TTTT), 265-284 (ENENQEKENNDNDNDNEPIE), and 289-326 (LEFNKFEEKPIKEVKVNTASSNKRNKKRNNPKKVKEEP). 3 stretches are compositionally biased toward low complexity: residues 14-24 (IPQPTITPPTQ), 46-79 (NKNNRNNKNNVDNNNNNNNNNNNNEKQNQTNVNN), and 93-124 (NNNNNNNNNNNNNNNNNNNNNNKNKYNKFNDN). Composition is skewed to basic and acidic residues over residues 182 to 196 (EAKKKEEEDARKRGE) and 209 to 218 (QTPDKKKKLE). Over residues 221 to 257 (TSKNNNKSSTTKTELTNTTTNTSSTTNPTTDTTTTTT) the composition is skewed to low complexity. 2 stretches are compositionally biased toward basic and acidic residues: residues 265 to 274 (ENENQEKENN) and 292 to 303 (NKFEEKPIKEVK). Basic residues predominate over residues 311–320 (KRNKKRNNPK).

This is an uncharacterized protein from Dictyostelium discoideum (Social amoeba).